The following is a 418-amino-acid chain: Zinc metalloproteinase-disintegrin-like batroxstatin-2 (418 aa).

One can recognise a Peptidase M12B domain in the interval 10-206; it reads KYVKLVLVAD…DMPQCILEKP (197 aa). 3 cysteine pairs are disulfide-bonded: Cys121–Cys201, Cys161–Cys185, and Cys163–Cys168. His146 is a Zn(2+) binding site. Residue Glu147 is part of the active site. Zn(2+) contacts are provided by His150 and His156. Positions 214 to 299 constitute a Disintegrin domain; that stretch reads PPVCGNYFVE…AECTDRFQRN (86 aa). Positions 216, 219, 221, 223, 226, and 229 each coordinate Ca(2+). 14 disulfide bridges follow: Cys217/Cys246, Cys228/Cys241, Cys230/Cys236, Cys240/Cys263, Cys254/Cys260, Cys259/Cys285, Cys272/Cys292, Cys279/Cys310, Cys303/Cys315, Cys322/Cys372, Cys337/Cys383, Cys350/Cys360, Cys367/Cys409, and Cys403/Cys414. The D/ECD-tripeptide signature appears at 278-280; the sequence is ECD. Residues Asp280, Met281, Asp283, Asp294, and Arg295 each coordinate Ca(2+). A glycan (N-linked (GlcNAc...) asparagine) is linked at Asn312.

It belongs to the venom metalloproteinase (M12B) family. P-III subfamily. P-IIIc sub-subfamily. As to quaternary structure, homodimer; disulfide-linked. Zn(2+) is required as a cofactor. Expressed by the venom gland.

The protein resides in the secreted. In terms of biological role, snake venom zinc metalloprotease that induces apoptosis in vascular endothelial cells (VEC), without degrading the extracellular matrix (it cannot cleave collagen) or inhibiting adhesion of VEC. Has also fibrinogenolytic and hemorrhagic activities. The protein is Zinc metalloproteinase-disintegrin-like batroxstatin-2 of Bothrops atrox (Barba amarilla).